The primary structure comprises 470 residues: 6-phospho-beta-galactosidase (470 aa).

D-galactose 6-phosphate-binding residues include glutamine 19, histidine 116, asparagine 159, glutamate 160, and asparagine 297. Glutamate 160 (proton donor) is an active-site residue. Glutamate 375 acts as the Nucleophile in catalysis. D-galactose 6-phosphate is bound by residues serine 430, tryptophan 431, lysine 437, and tyrosine 439.

Belongs to the glycosyl hydrolase 1 family.

It catalyses the reaction a 6-phospho-beta-D-galactoside + H2O = D-galactose 6-phosphate + an alcohol. It participates in carbohydrate metabolism; lactose degradation; D-galactose 6-phosphate and beta-D-glucose from lactose 6-phosphate: step 1/1. The chain is 6-phospho-beta-galactosidase from Staphylococcus aureus (strain MRSA252).